The following is a 290-amino-acid chain: Probable transcriptional regulatory protein HAH1 (290 aa).

This sequence belongs to the TACO1 family.

Its subcellular location is the mitochondrion. This is Probable transcriptional regulatory protein HAH1 from Saccharomyces cerevisiae (strain ATCC 204508 / S288c) (Baker's yeast).